A 427-amino-acid polypeptide reads, in one-letter code: Dihydroorotase (427 aa).

Zn(2+) contacts are provided by histidine 58 and histidine 60. Substrate contacts are provided by residues 60–62 (HYR) and asparagine 92. Residues aspartate 150, histidine 177, and histidine 230 each contribute to the Zn(2+) site. Asparagine 276 serves as a coordination point for substrate. Aspartate 303 provides a ligand contact to Zn(2+). Aspartate 303 is an active-site residue. Residues histidine 307 and 321–322 (FG) contribute to the substrate site.

The protein belongs to the metallo-dependent hydrolases superfamily. DHOase family. Class I DHOase subfamily. Requires Zn(2+) as cofactor.

It carries out the reaction (S)-dihydroorotate + H2O = N-carbamoyl-L-aspartate + H(+). It functions in the pathway pyrimidine metabolism; UMP biosynthesis via de novo pathway; (S)-dihydroorotate from bicarbonate: step 3/3. Catalyzes the reversible cyclization of carbamoyl aspartate to dihydroorotate. The chain is Dihydroorotase from Lactobacillus leichmannii.